Reading from the N-terminus, the 101-residue chain is Small ribosomal subunit protein bS18c (101 aa).

This sequence belongs to the bacterial ribosomal protein bS18 family. As to quaternary structure, part of the 30S ribosomal subunit.

It is found in the plastid. It localises to the chloroplast. This is Small ribosomal subunit protein bS18c from Vitis vinifera (Grape).